A 53-amino-acid chain; its full sequence is HOXB-AS3 peptide (53 aa).

The tract at residues 1–53 (MPVLPGTQRYPHQRRRFQAAGGGAESGKRGSEEAPGVAWSGSESGRDAATPAW) is disordered.

Interacts with HNRNPA1 (via the RGG-box). Interacts with IGF2BP2.

In terms of biological role, blocks the binding of HNRNPA1 to the intronic sequences flanking exon 9 of the PKM gene by competitively binding to the HNRNPA1 RGG-box motif. This inhibits inclusion of exon 9 and promotes inclusion of exon 10, suppressing formation of the PKM M2 isoform and promoting production of the M1 isoform. Also suppresses HNRNPA1-mediated processing of microRNA 18a (miR-18a). Promotes MYC stability through interaction with IGF2BP2. This Homo sapiens (Human) protein is HOXB-AS3 peptide.